Consider the following 477-residue polypeptide: Probable cytosolic Fe-S cluster assembly factor GG21400 (477 aa).

Cysteine 23, cysteine 68, cysteine 71, cysteine 74, cysteine 187, cysteine 243, cysteine 395, and cysteine 399 together coordinate [4Fe-4S] cluster.

It belongs to the NARF family.

Functionally, component of the cytosolic iron-sulfur (Fe/S) protein assembly machinery. Required for maturation of extramitochondrial Fe/S proteins. This is Probable cytosolic Fe-S cluster assembly factor GG21400 from Drosophila erecta (Fruit fly).